We begin with the raw amino-acid sequence, 970 residues long: uncharacterized protein (970 aa).

Residues 942–970 (QLSFEEDGWTESEPRPVRREAHVRAKERH) form a disordered region. The segment covering 953–970 (SEPRPVRREAHVRAKERH) has biased composition (basic and acidic residues).

This is an uncharacterized protein from Frog virus 3 (isolate Goorha) (FV-3).